A 241-amino-acid polypeptide reads, in one-letter code: Endothelial protein C receptor (241 aa).

Residues 1 to 17 (MLTTLLPLLPLLLPGWA) form the signal peptide. Residues 18–212 (LCSQEASDGP…GSQTGRSYTS (195 aa)) are Extracellular-facing. N-linked (GlcNAc...) asparagine glycosylation is found at asparagine 49, asparagine 66, asparagine 138, and asparagine 174. 2 cysteine pairs are disulfide-bonded: cysteine 120–cysteine 188 and cysteine 221–cysteine 234. A helical transmembrane segment spans residues 213 to 233 (LVLGVLVGCFIVTGVAVGIFL). Residues 234–241 (CTGGRRRC) lie on the Cytoplasmic side of the membrane.

As to expression, expressed in endothelial cells.

The protein resides in the membrane. Functionally, binds activated protein C. Enhances protein C activation by the thrombin-thrombomodulin complex; plays a role in the protein C pathway controlling blood coagulation. In Bos taurus (Bovine), this protein is Endothelial protein C receptor (PROCR).